The sequence spans 327 residues: Nuclear apoptosis-inducing factor 1 (327 aa).

Positions 1 to 70 (MAVPAKKRKM…CRRELPEVKK (70 aa)) are required for nuclear localization and apoptosis-inducing activity. Residues 87 to 98 (RAAVEGGEAPGP) are compositionally biased toward low complexity. 2 disordered regions span residues 87–118 (RAAV…GGGP) and 303–327 (NTAN…SIIQ). The span at 104–118 (AGGPGTGGGSGGGGP) shows a compositional bias: gly residues. The segment covering 316–327 (VAQNGQPDSIIQ) has biased composition (polar residues).

This sequence belongs to the NAIF1 family. In terms of assembly, interacts with HARBI1. Widely expressed.

Its subcellular location is the nucleus. Its function is as follows. Induces apoptosis. This is Nuclear apoptosis-inducing factor 1 (NAIF1) from Homo sapiens (Human).